We begin with the raw amino-acid sequence, 103 residues long: Acylphosphatase-2 (103 aa).

An Acylphosphatase-like domain is found at 13-103; the sequence is SVDYEVFGRV…LQYNGFSTRY (91 aa). Active-site residues include Arg-28 and Asn-46.

It belongs to the acylphosphatase family.

It catalyses the reaction an acyl phosphate + H2O = a carboxylate + phosphate + H(+). This chain is Acylphosphatase-2 (acyp2), found in Xenopus tropicalis (Western clawed frog).